Here is a 343-residue protein sequence, read N- to C-terminus: 4-hydroxythreonine-4-phosphate dehydrogenase (343 aa).

Residues His141 and Thr142 each coordinate substrate. Residues His175, His220, and His275 each coordinate a divalent metal cation. Residues Lys283, Asn292, and Arg301 each contribute to the substrate site.

Belongs to the PdxA family. Homodimer. Zn(2+) is required as a cofactor. Mg(2+) serves as cofactor. The cofactor is Co(2+).

The protein localises to the cytoplasm. The catalysed reaction is 4-(phosphooxy)-L-threonine + NAD(+) = 3-amino-2-oxopropyl phosphate + CO2 + NADH. It participates in cofactor biosynthesis; pyridoxine 5'-phosphate biosynthesis; pyridoxine 5'-phosphate from D-erythrose 4-phosphate: step 4/5. Functionally, catalyzes the NAD(P)-dependent oxidation of 4-(phosphooxy)-L-threonine (HTP) into 2-amino-3-oxo-4-(phosphooxy)butyric acid which spontaneously decarboxylates to form 3-amino-2-oxopropyl phosphate (AHAP). The chain is 4-hydroxythreonine-4-phosphate dehydrogenase from Janthinobacterium sp. (strain Marseille) (Minibacterium massiliensis).